We begin with the raw amino-acid sequence, 125 residues long: Period circadian protein (125 aa).

The disordered stretch occupies residues 1–125 (EGSGGSGSSG…VTLTESLLNK (125 aa)). A run of 3 repeats spans residues 30-31 (GT), 33-34 (GT), and 35-36 (GT). The segment covering 30-84 (GTGGTGTNTGTNTGTGTGTGTGTGTGTGTGTGTGTGTGTGTGTGTGTGKGAGAGT) has biased composition (gly residues). The 28 X 2 AA approximate tandem repeats of G-[TA] stretch occupies residues 30-86 (GTGGTGTNTGTNTGTGTGTGTGTGTGTGTGTGTGTGTGTGTGTGTGTGKGAGAGTGT). The stretch at 37–38 (NT) is one 4; approximate repeat. Repeat unit 5 spans residues 39 to 40 (GT). The 6; approximate repeat unit spans residues 41 to 42 (NT). 17 consecutive repeat copies span residues 43–44 (GT), 45–46 (GT), 47–48 (GT), 49–50 (GT), 51–52 (GT), 53–54 (GT), 55–56 (GT), 57–58 (GT), 59–60 (GT), 61–62 (GT), 63–64 (GT), 65–66 (GT), 67–68 (GT), 69–70 (GT), 71–72 (GT), 73–74 (GT), and 75–76 (GT). Residues 77 to 78 (GK) form a 24; approximate repeat. Tandem repeats lie at residues 79–80 (GA), 81–82 (GA), 83–84 (GT), and 85–86 (GT). Residues 85–112 (GTATNETAGPGTTTTTTTRSTTTAATAA) show a composition bias toward low complexity. The segment covering 116–125 (VTLTESLLNK) has biased composition (polar residues).

In terms of assembly, forms a heterodimer with timeless (TIM); the complex then translocates into the nucleus. Post-translationally, phosphorylated with a circadian rhythmicity, probably by the double-time protein (dbt). Phosphorylation could be implicated in the stability of per monomer and in the formation of heterodimer per-tim.

It is found in the nucleus. It localises to the cytoplasm. The protein localises to the perinuclear region. Functionally, essential for biological clock functions. Determines the period length of circadian and ultradian rhythms; an increase in PER dosage leads to shortened circadian rhythms and a decrease leads to lengthened circadian rhythms. Essential for the circadian rhythmicity of locomotor activity, eclosion behavior, and for the rhythmic component of the male courtship song that originates in the thoracic nervous system. The biological cycle depends on the rhythmic formation and nuclear localization of the TIM-PER complex. Light induces the degradation of TIM, which promotes elimination of PER. Nuclear activity of the heterodimer coordinatively regulates PER and TIM transcription through a negative feedback loop. Behaves as a negative element in circadian transcriptional loop. Does not appear to bind DNA, suggesting indirect transcriptional inhibition. The chain is Period circadian protein (per) from Drosophila ananassae (Fruit fly).